Consider the following 25-residue polypeptide: Large ribosomal subunit protein uL29 (25 aa).

This sequence belongs to the universal ribosomal protein uL29 family.

The sequence is that of Large ribosomal subunit protein uL29 (rpmC) from Brevundimonas vesicularis (Pseudomonas vesicularis).